A 59-amino-acid polypeptide reads, in one-letter code: UPF0434 protein GOX0764 (59 aa).

It belongs to the UPF0434 family.

The protein is UPF0434 protein GOX0764 of Gluconobacter oxydans (strain 621H) (Gluconobacter suboxydans).